The primary structure comprises 222 residues: WAP four-disulfide core domain protein 1 (222 aa).

The N-terminal stretch at 1–32 (MDSRMLSDQRFCRRIFAAALCVLVLLADSGCA) is a signal peptide. The WAP domain maps to 61–110 (HYQKNDRCPPPPQTLPDRACEVPSCRSDSECERHKRCCYNGCIYACLESV). Cystine bridges form between C68/C98, C80/C102, C85/C97, and C91/C106.

It localises to the secreted. Functionally, has growth inhibitory activity. This chain is WAP four-disulfide core domain protein 1 (WFDC1), found in Gallus gallus (Chicken).